A 1072-amino-acid polypeptide reads, in one-letter code: MLGDEKEGTSAIPGFNQIQFEGFYRFIDQGLIEELAKFPKIEDIDHEIEFQLFVETYQLVEPLIKERDAVYESLTYSSELYVSAGLIWKTSRNMQEQRIFIGNIPLMNSLGTSIVNGIYRIVINQILQSPGIYYQSELDHNGISVYTGTIISDWGGRLELEIDKKARIWARVSRKQKISILVLSSAMGLNLREILENVCYPEIFLSFLTDKEKKKIGSKENAILEFYQQFSCVGGDPIFSESLCKELQKKFFHQRCELGRIGRRNINWRLNLNIPQNNIFLLPRDVLAAADHLIGMKFGMGTLDDMNHLKNKRIRSVADLLQDQLGLALARLENVVKGTISGAIRHKLIPTPQNLVTSTPLTTTYESFFGLHPLSQVLDRTNPLTQIVHGRKLSYLGPGGLTGRTANFRIRDIHPSHYGRICPIDTSEGINVGLIGSLSIHARIGDWGSLESPFYELFEKSKKARIRMLFLSPSQDEYYMIAAGNSLALNRGIQEEQAVPARYRQEFLTIAWEEVHLRSIFPFQYFSIGASLIPFIEHNDANRALMSSNMQRQAVPLSRSEKCIVGTGLERQVALDSGVPAIAEHEGKILYTDTEKIVFSGNGDTLSIPLIMYQRSNKNTCMHQKPQVRRGKCIKKGQILADGAATVGGELALGKNILVAYMPWEGYNFEDAVLISECLVYGDIYTSFHIRKYEIQTHVTTQGPERITKEIPHLEGRLLRNLDKNGIVMLGSWVETGDILVGKLTPQVAKESSYAPEDRLLRAILGIQVSTSKETCLKLPIGGRGRVIDVRWVQKKGGSSYNPEIIRVYISQKREIKVGDKVAGRHGNKGIISKILPRQDMPYLQDGRPVDMVFNPLGVPSRMNVGQIFECSLGLAGSLLDRHYRIAPFDERYEQEASRKLVFSELYEASKQTANPWVFEPEYPGKSRIFDGRTGDPFEQPVIIGKPYILKLIHQVDDKIHGRSSGHYALVTQQPLRGRSKQGGQRVGEMEVWALEGFGVAHILQEMLTYKSDHIRARQEVLGTTIIGGTIPKPEDAPESFRLLVRELRSLALELNHFLVSEKNFQINRKEV.

It belongs to the RNA polymerase beta chain family. In terms of assembly, in plastids the minimal PEP RNA polymerase catalytic core is composed of four subunits: alpha, beta, beta', and beta''. When a (nuclear-encoded) sigma factor is associated with the core the holoenzyme is formed, which can initiate transcription.

It is found in the plastid. The protein resides in the chloroplast. It catalyses the reaction RNA(n) + a ribonucleoside 5'-triphosphate = RNA(n+1) + diphosphate. In terms of biological role, DNA-dependent RNA polymerase catalyzes the transcription of DNA into RNA using the four ribonucleoside triphosphates as substrates. The chain is DNA-directed RNA polymerase subunit beta from Arabidopsis thaliana (Mouse-ear cress).